A 318-amino-acid chain; its full sequence is uncharacterized protein (318 aa).

The protein to A.aeolicus AA07 and AA34.

This is an uncharacterized protein from Aquifex aeolicus (strain VF5).